The primary structure comprises 184 residues: Photosystem I assembly protein Ycf4 (184 aa).

2 consecutive transmembrane segments (helical) span residues 22–42 (FCWAFILFLGSLGFLLVGTSS) and 57–77 (IIFFPQGIVMSFYGIAGLFIS).

This sequence belongs to the Ycf4 family.

It is found in the plastid. The protein localises to the chloroplast thylakoid membrane. Seems to be required for the assembly of the photosystem I complex. The chain is Photosystem I assembly protein Ycf4 from Lobularia maritima (Sweet alyssum).